The chain runs to 398 residues: Exodeoxyribonuclease 7 large subunit (398 aa).

This sequence belongs to the XseA family. In terms of assembly, heterooligomer composed of large and small subunits.

It is found in the cytoplasm. The catalysed reaction is Exonucleolytic cleavage in either 5'- to 3'- or 3'- to 5'-direction to yield nucleoside 5'-phosphates.. Functionally, bidirectionally degrades single-stranded DNA into large acid-insoluble oligonucleotides, which are then degraded further into small acid-soluble oligonucleotides. The polypeptide is Exodeoxyribonuclease 7 large subunit (Salinibacter ruber (strain DSM 13855 / M31)).